The following is a 373-amino-acid chain: Queuine tRNA-ribosyltransferase (373 aa).

Asp-90 functions as the Proton acceptor in the catalytic mechanism. Substrate is bound by residues 90-94 (DSGGF), Asp-144, Gln-193, and Gly-220. The RNA binding stretch occupies residues 251-257 (GVGTPED). Asp-270 functions as the Nucleophile in the catalytic mechanism. Residues 275-279 (TRNAR) are RNA binding; important for wobble base 34 recognition. Zn(2+) contacts are provided by Cys-308, Cys-310, Cys-313, and His-339.

This sequence belongs to the queuine tRNA-ribosyltransferase family. As to quaternary structure, homodimer. Within each dimer, one monomer is responsible for RNA recognition and catalysis, while the other monomer binds to the replacement base PreQ1. The cofactor is Zn(2+).

The catalysed reaction is 7-aminomethyl-7-carbaguanine + guanosine(34) in tRNA = 7-aminomethyl-7-carbaguanosine(34) in tRNA + guanine. Its pathway is tRNA modification; tRNA-queuosine biosynthesis. Its function is as follows. Catalyzes the base-exchange of a guanine (G) residue with the queuine precursor 7-aminomethyl-7-deazaguanine (PreQ1) at position 34 (anticodon wobble position) in tRNAs with GU(N) anticodons (tRNA-Asp, -Asn, -His and -Tyr). Catalysis occurs through a double-displacement mechanism. The nucleophile active site attacks the C1' of nucleotide 34 to detach the guanine base from the RNA, forming a covalent enzyme-RNA intermediate. The proton acceptor active site deprotonates the incoming PreQ1, allowing a nucleophilic attack on the C1' of the ribose to form the product. After dissociation, two additional enzymatic reactions on the tRNA convert PreQ1 to queuine (Q), resulting in the hypermodified nucleoside queuosine (7-(((4,5-cis-dihydroxy-2-cyclopenten-1-yl)amino)methyl)-7-deazaguanosine). This Campylobacter jejuni (strain RM1221) protein is Queuine tRNA-ribosyltransferase.